The sequence spans 272 residues: Leucoagglutinating phytohemagglutinin (272 aa).

An N-terminal signal peptide occupies residues 1–20; it reads MASSKFFTVLFLVLLTHANS. An N-linked (GlcNAc...) (high mannose) asparagine glycan is attached at Asn-32. Residue Asn-80 is glycosylated (N-linked (GlcNAc...) (complex) asparagine).

It belongs to the leguminous lectin family. Homotetramer. In terms of processing, N-glycosylated on Asn-80; contains xylose.

Its function is as follows. This insecticidal carbohydrate-binding lectin is toxic for the cowpea weevil. The protein is Leucoagglutinating phytohemagglutinin (DLEC2) of Phaseolus vulgaris (Kidney bean).